The sequence spans 384 residues: Bacterial ceramide synthase (384 aa).

Its subcellular location is the cytoplasm. The catalysed reaction is 3-oxosphinganine + a fatty acyl-CoA = N-acyl-3-oxosphinganine + CoA + H(+). It catalyses the reaction 3-oxosphinganine + tetradecanoyl-CoA = N-tetradecanoyl-3-oxosphinganine + CoA + H(+). It carries out the reaction 3-oxosphinganine + hexadecanoyl-CoA = N-hexadecanoyl-3-oxosphinganine + CoA + H(+). The enzyme catalyses 3-oxosphinganine + (9Z)-hexadecenoyl-CoA = N-(9Z-hexadecenoyl)-3-oxosphinganine + CoA + H(+). The catalysed reaction is 3-oxosphinganine + octanoyl-CoA = N-octanoyl-3-oxosphinganine + CoA + H(+). It catalyses the reaction 3-oxosphinganine + decanoyl-CoA = N-decanoyl-3-oxosphinganine + CoA + H(+). It carries out the reaction 3-oxosphinganine + dodecanoyl-CoA = N-dodecanoyl-3-oxosphinganine + CoA + H(+). The enzyme catalyses 3-oxosphinganine + octadecanoyl-CoA = N-octadecanoyl-3-oxosphinganine + CoA + H(+). The catalysed reaction is 3-oxosphinganine + eicosanoyl-CoA = N-eicosanoyl-3-oxosphinganine + CoA + H(+). It catalyses the reaction 3-oxosphinganine + docosanoyl-CoA = N-docosanoyl-3-ketodihydrosphingosine + CoA + H(+). It carries out the reaction 3-oxosphinganine + tetracosanoyl-CoA = N-tetracosanoyl-3-oxosphinganine + CoA + H(+). It functions in the pathway lipid metabolism; sphingolipid metabolism. Its function is as follows. Involved in de novo bacterial ceramide synthesis. Catalyzes the condensation of 3-oxosphinganine with an acyl-CoA to generate oxidized ceramides. Can use acyl-CoA substrates ranging from C8 to C24, with highest in vitro activity with C14 and very little activity with acyl-CoA thioesters of 18 carbons or longer. May have a preference for monounsaturated acyl-CoA substrates, as it has a threefold greater preference for C16:1-CoA over C16:0-CoA as a substrate in vitro. The polypeptide is Bacterial ceramide synthase (Caulobacter vibrioides (strain NA1000 / CB15N) (Caulobacter crescentus)).